The sequence spans 386 residues: Nucleosome assembly protein 1-like 4 (386 aa).

The interval 1–28 (MAENSLSDGGPADSVEAAKNASNTEKLT) is disordered. Alanine 2 bears the N-acetylalanine mark. Phosphoserine is present on residues serine 5, serine 7, and serine 49. Threonine 51 carries the phosphothreonine modification. 2 positions are modified to phosphoserine: serine 53 and serine 54. At threonine 58 the chain carries Phosphothreonine. Lysine 105 carries the N6-acetyllysine modification. The residue at position 125 (serine 125) is a Phosphoserine. At lysine 146 the chain carries N6-acetyllysine. The short motif at 265–271 (IKKKQKH) is the Nuclear localization signal element. Serine 304 is subject to Phosphoserine. A compositionally biased stretch (acidic residues) spans 339-370 (AIEDDDNFEEGEEGEEEELEGDEEGEDEDDAD). Residues 339–386 (AIEDDDNFEEGEEGEEEELEGDEEGEDEDDADVNPKKEPIQPAECKQQ) form a disordered region.

The protein belongs to the nucleosome assembly protein (NAP) family. In terms of assembly, interacts with core (H2A, H2B, H3, H4) and linker (H1) histones. Polyglutamylated and polyglycylated. These 2 modifications occur exclusively on glutamate residues and result in either polyglutamate or polyglycine chains on the gamma-carboxyl group. Both modifications can coexist on the same protein on adjacent residues, and lowering polyglycylation levels increases polyglutamylation, and reciprocally. Polyglutamylated by TTLL4. Post-translationally, phosphorylated at the G0/G1 boundary but it is not phosphorylated in S-phase. Phosphorylated protein remains in the cytoplasm in a complex with histones during the G0/G1 transition, whereas dephosphorylation triggers its transport into the nucleus at the G1/S-boundary.

The protein localises to the nucleus. It is found in the cytoplasm. Functionally, acts as a histone chaperone in nucleosome assembly. The sequence is that of Nucleosome assembly protein 1-like 4 (Nap1l4) from Rattus norvegicus (Rat).